Here is a 511-residue protein sequence, read N- to C-terminus: IWS1-like protein (511 aa).

Positions 1–200 (MSDHEEESHG…DDGPVDRHGR (200 aa)) are disordered. 2 stretches are compositionally biased toward low complexity: residues 11-30 (ASPT…PISP) and 55-86 (APAS…SPVK). The segment covering 94-103 (DSDEDSDAEE) has biased composition (acidic residues). Residues 134–143 (HEGTSKKEPT) show a composition bias toward basic and acidic residues. Acidic residues predominate over residues 166–179 (LDEFVEGRDEEESQ). Residues 294 to 374 (SALSEWLAPL…GEWARPIYHL (81 aa)) form the TFIIS N-terminal domain. A disordered region spans residues 382-454 (SRQEREERDY…RARVPKPSTK (73 aa)). 2 stretches are compositionally biased toward basic and acidic residues: residues 383–395 (RQER…SRMP) and 414–425 (DQPKRPRIRDAD).

Belongs to the IWS1 family.

It localises to the nucleus. The polypeptide is IWS1-like protein (Caenorhabditis elegans).